A 726-amino-acid polypeptide reads, in one-letter code: Catalase-peroxidase (726 aa).

Residues methionine 1–threonine 33 form a disordered region. The segment at residues tryptophan 105–tyrosine 226 is a cross-link (tryptophyl-tyrosyl-methioninium (Trp-Tyr) (with M-252)). Catalysis depends on histidine 106, which acts as the Proton acceptor. Residues tyrosine 226–methionine 252 constitute a cross-link (tryptophyl-tyrosyl-methioninium (Tyr-Met) (with W-105)). Residue histidine 267 participates in heme b binding.

This sequence belongs to the peroxidase family. Peroxidase/catalase subfamily. As to quaternary structure, homodimer or homotetramer. Requires heme b as cofactor. Formation of the three residue Trp-Tyr-Met cross-link is important for the catalase, but not the peroxidase activity of the enzyme.

The catalysed reaction is H2O2 + AH2 = A + 2 H2O. It carries out the reaction 2 H2O2 = O2 + 2 H2O. Functionally, bifunctional enzyme with both catalase and broad-spectrum peroxidase activity. The sequence is that of Catalase-peroxidase from Escherichia coli (strain K12 / DH10B).